Reading from the N-terminus, the 472-residue chain is tRNA-2-methylthio-N(6)-dimethylallyladenosine synthase (472 aa).

A disordered region spans residues 1–24 (MTGTPDVFPPATPGGAPLVALPAG). In terms of domain architecture, MTTase N-terminal spans 33 to 150 (GKLYIKTHGC…LPELIRARRE (118 aa)). Residues Cys42, Cys79, Cys113, Cys187, Cys191, and Cys194 each contribute to the [4Fe-4S] cluster site. The Radical SAM core domain occupies 173 to 407 (RAEGASAFVS…RINAHAAGIS (235 aa)). The region spanning 408–471 (EKMVGTVQTV…TNSLRARVVA (64 aa)) is the TRAM domain.

The protein belongs to the methylthiotransferase family. MiaB subfamily. In terms of assembly, monomer. [4Fe-4S] cluster is required as a cofactor.

It localises to the cytoplasm. It carries out the reaction N(6)-dimethylallyladenosine(37) in tRNA + (sulfur carrier)-SH + AH2 + 2 S-adenosyl-L-methionine = 2-methylsulfanyl-N(6)-dimethylallyladenosine(37) in tRNA + (sulfur carrier)-H + 5'-deoxyadenosine + L-methionine + A + S-adenosyl-L-homocysteine + 2 H(+). In terms of biological role, catalyzes the methylthiolation of N6-(dimethylallyl)adenosine (i(6)A), leading to the formation of 2-methylthio-N6-(dimethylallyl)adenosine (ms(2)i(6)A) at position 37 in tRNAs that read codons beginning with uridine. The protein is tRNA-2-methylthio-N(6)-dimethylallyladenosine synthase of Stenotrophomonas maltophilia (strain K279a).